The following is a 314-amino-acid chain: Mitochondrial RNA-splicing protein MRS3 (314 aa).

Solcar repeat units follow at residues 31–118 (APLY…CKKN), 128–210 (HHPF…STKF), and 217–310 (YNPL…AKHF). Transmembrane regions (helical) follow at residues 33 to 52 (LYHQ…SVMF), 93 to 112 (GVQS…FGTY), 130 to 149 (PFKT…ALMN), 185 to 204 (SYPT…FVIY), 219 to 238 (PLIH…AITT), and 285 to 298 (GWKP…PATA).

It belongs to the mitochondrial carrier (TC 2.A.29) family.

It is found in the mitochondrion inner membrane. MRS3 suppresses a mitochondrial splice defect in the first intron of the COB gene. It may act as a carrier, exerting its suppressor activity via modulation of solute concentrations in the mitochondrion (possibly of cations). This Saccharomyces cerevisiae (strain ATCC 204508 / S288c) (Baker's yeast) protein is Mitochondrial RNA-splicing protein MRS3 (MRS3).